We begin with the raw amino-acid sequence, 337 residues long: Protein-arginine kinase (337 aa).

One can recognise a Phosphagen kinase C-terminal domain in the interval 8–239; that stretch reads VVLSSRIRLA…KQIISSERRA (232 aa). Residues 11-15, histidine 76, arginine 110, 161-165, and 192-197 each bind ATP; these read SSRIR, RASVM, and RGIYGE. The RDXXRA motif of the pArg binding pocket involved in allosteric regulation motif lies at 321-326; the sequence is RDVKRA.

The protein belongs to the ATP:guanido phosphotransferase family.

The enzyme catalyses L-arginyl-[protein] + ATP = N(omega)-phospho-L-arginyl-[protein] + ADP + H(+). With respect to regulation, appears to be allosterically activated by the binding of pArg-containing polypeptides to the pArg-binding pocket localized in the C-terminal domain of McsB. Functionally, catalyzes the specific phosphorylation of arginine residues in proteins. The protein is Protein-arginine kinase of Caldanaerobacter subterraneus subsp. tengcongensis (strain DSM 15242 / JCM 11007 / NBRC 100824 / MB4) (Thermoanaerobacter tengcongensis).